We begin with the raw amino-acid sequence, 173 residues long: Placenta-specific protein 1 (173 aa).

Positions 1 to 23 (MNLRKFLGGTVLVAFMLFSYSEQ) are cleaved as a signal peptide.

This sequence belongs to the PLAC1 family. As to expression, expressed in placenta.

Its subcellular location is the secreted. May play a role in placental development. The sequence is that of Placenta-specific protein 1 from Mus musculus (Mouse).